Reading from the N-terminus, the 67-residue chain is Small ribosomal subunit protein eS27 (67 aa).

Residues Cys-22, Cys-25, Cys-41, and Cys-44 each contribute to the Zn(2+) site. Residues 22–44 form a C4-type zinc finger; that stretch reads CPDCGNEQVTFSHAAMVVRCLVC.

It belongs to the eukaryotic ribosomal protein eS27 family. In terms of assembly, part of the 30S ribosomal subunit. The cofactor is Zn(2+).

This is Small ribosomal subunit protein eS27 from Pyrobaculum calidifontis (strain DSM 21063 / JCM 11548 / VA1).